Reading from the N-terminus, the 252-residue chain is 3-dehydroquinate dehydratase (252 aa).

Residues Ser-21, Glu-46 to Arg-48, and Arg-82 each bind 3-dehydroquinate. His-143 serves as the catalytic Proton donor/acceptor. Lys-170 functions as the Schiff-base intermediate with substrate in the catalytic mechanism. 3 residues coordinate 3-dehydroquinate: Arg-213, Ser-232, and Gln-236.

The protein belongs to the type-I 3-dehydroquinase family. In terms of assembly, homodimer.

It catalyses the reaction 3-dehydroquinate = 3-dehydroshikimate + H2O. Its pathway is metabolic intermediate biosynthesis; chorismate biosynthesis; chorismate from D-erythrose 4-phosphate and phosphoenolpyruvate: step 3/7. Its function is as follows. Involved in the third step of the chorismate pathway, which leads to the biosynthesis of aromatic amino acids. Catalyzes the cis-dehydration of 3-dehydroquinate (DHQ) and introduces the first double bond of the aromatic ring to yield 3-dehydroshikimate. The polypeptide is 3-dehydroquinate dehydratase (Salmonella choleraesuis (strain SC-B67)).